An 89-amino-acid chain; its full sequence is Small ribosomal subunit protein bS20 (89 aa).

The segment covering 1-10 (MKNRSAIKRH) has biased composition (basic residues). The segment at 1 to 30 (MKNRSAIKRHNQSEVRRMRNRSAKSEVRTT) is disordered. A compositionally biased stretch (basic and acidic residues) spans 11–30 (NQSEVRRMRNRSAKSEVRTT).

Belongs to the bacterial ribosomal protein bS20 family.

Its function is as follows. Binds directly to 16S ribosomal RNA. The polypeptide is Small ribosomal subunit protein bS20 (Treponema denticola (strain ATCC 35405 / DSM 14222 / CIP 103919 / JCM 8153 / KCTC 15104)).